We begin with the raw amino-acid sequence, 2417 residues long: Protein pad-1 (2417 aa).

4 disordered regions span residues 409–437 (SSNSSSLKKSPRKIQQSLKNPRKPGDREG), 449–475 (SNKDDDVTSVTSSAAANASSAPPPDEE), 994–1029 (TSTGEDSGDPSAAGAAGILRSSSPDPDVVPAFDDDT), and 1957–2032 (SMSN…RRDP). 2 stretches are compositionally biased toward low complexity: residues 456–468 (TSVTSSAAANASS) and 1002–1024 (DPSAAGAAGILRSSSPDPDVVPA). Residues 1969 to 1982 (DNPSGSTRNSTLSL) are compositionally biased toward polar residues. Positions 2003–2014 (SKSENMKIEKKS) are enriched in basic and acidic residues. Over residues 2015-2025 (SSNLRASIKDT) the composition is skewed to polar residues.

It belongs to the DOP1 family.

In terms of biological role, may be involved in protein traffic between late Golgi and early endosomes. Essential for cell patterning during gastrulation. The chain is Protein pad-1 (pad-1) from Caenorhabditis elegans.